Consider the following 158-residue polypeptide: Transcription elongation factor GreA (158 aa).

Belongs to the GreA/GreB family.

Functionally, necessary for efficient RNA polymerase transcription elongation past template-encoded arresting sites. The arresting sites in DNA have the property of trapping a certain fraction of elongating RNA polymerases that pass through, resulting in locked ternary complexes. Cleavage of the nascent transcript by cleavage factors such as GreA or GreB allows the resumption of elongation from the new 3'terminus. GreA releases sequences of 2 to 3 nucleotides. The polypeptide is Transcription elongation factor GreA (Salmonella typhi).